The primary structure comprises 97 residues: MAAQIPQSNEVRVGKKPVMNYVLATLTLLNQGVDRIEIKARGRAISKAVDTVEIVRNRFLPGQVRVAEIRIGSQTVTSADGRQSRISTIDIVLERVK.

Lysine 15 bears the N6-acetyllysine mark.

The protein belongs to the histone-like Alba family. Acetylated. Acetylation at Lys-15 decreases DNA-binding affinity.

It localises to the cytoplasm. The protein localises to the chromosome. Functionally, binds double-stranded DNA tightly but without sequence specificity. Involved in DNA compaction. This chain is DNA/RNA-binding protein Alba, found in Ignicoccus hospitalis (strain KIN4/I / DSM 18386 / JCM 14125).